The chain runs to 130 residues: Holo-[acyl-carrier-protein] synthase (130 aa).

Positions 8 and 62 each coordinate Mg(2+).

Belongs to the P-Pant transferase superfamily. AcpS family. Mg(2+) is required as a cofactor.

The protein localises to the cytoplasm. It catalyses the reaction apo-[ACP] + CoA = holo-[ACP] + adenosine 3',5'-bisphosphate + H(+). Functionally, transfers the 4'-phosphopantetheine moiety from coenzyme A to a Ser of acyl-carrier-protein. This is Holo-[acyl-carrier-protein] synthase from Polynucleobacter asymbioticus (strain DSM 18221 / CIP 109841 / QLW-P1DMWA-1) (Polynucleobacter necessarius subsp. asymbioticus).